A 79-amino-acid chain; its full sequence is Conotoxin 1 (79 aa).

An N-terminal signal peptide occupies residues 1–22 (MKLTCVLIITVLFLTASQLITA). A propeptide spanning residues 23 to 46 (DYSRDQRQYRAVRLGDEMRTFKGA) is cleaved from the precursor. Cystine bridges form between Cys49/Cys62, Cys56/Cys67, and Cys61/Cys77.

It belongs to the conotoxin O1 superfamily. In terms of tissue distribution, expressed by the venom duct.

Its subcellular location is the secreted. The sequence is that of Conotoxin 1 from Conus vexillum (Flag cone).